We begin with the raw amino-acid sequence, 318 residues long: N-acetyl-gamma-glutamyl-phosphate reductase (318 aa).

The active site involves cysteine 132.

It belongs to the NAGSA dehydrogenase family. Type 1 subfamily.

It is found in the cytoplasm. It catalyses the reaction N-acetyl-L-glutamate 5-semialdehyde + phosphate + NADP(+) = N-acetyl-L-glutamyl 5-phosphate + NADPH + H(+). It participates in amino-acid biosynthesis; L-arginine biosynthesis; N(2)-acetyl-L-ornithine from L-glutamate: step 3/4. Its function is as follows. Catalyzes the NADPH-dependent reduction of N-acetyl-5-glutamyl phosphate to yield N-acetyl-L-glutamate 5-semialdehyde. This chain is N-acetyl-gamma-glutamyl-phosphate reductase, found in Azobacteroides pseudotrichonymphae genomovar. CFP2.